A 418-amino-acid chain; its full sequence is Histidinol dehydrogenase (418 aa).

NAD(+) contacts are provided by Tyr119, Gln180, and Asn203. Residues Thr226, Gln248, and His251 each coordinate substrate. The Zn(2+) site is built by Gln248 and His251. Active-site proton acceptor residues include Glu316 and His317. Residues His317, Asp350, Glu404, and His409 each coordinate substrate. Asp350 is a binding site for Zn(2+). His409 contacts Zn(2+).

It belongs to the histidinol dehydrogenase family. Zn(2+) is required as a cofactor.

It carries out the reaction L-histidinol + 2 NAD(+) + H2O = L-histidine + 2 NADH + 3 H(+). Its pathway is amino-acid biosynthesis; L-histidine biosynthesis; L-histidine from 5-phospho-alpha-D-ribose 1-diphosphate: step 9/9. Functionally, catalyzes the sequential NAD-dependent oxidations of L-histidinol to L-histidinaldehyde and then to L-histidine. The protein is Histidinol dehydrogenase of Staphylococcus aureus (strain MSSA476).